The chain runs to 230 residues: Probable nicotinate-nucleotide adenylyltransferase (230 aa).

The protein belongs to the NadD family.

The catalysed reaction is nicotinate beta-D-ribonucleotide + ATP + H(+) = deamido-NAD(+) + diphosphate. The protein operates within cofactor biosynthesis; NAD(+) biosynthesis; deamido-NAD(+) from nicotinate D-ribonucleotide: step 1/1. Functionally, catalyzes the reversible adenylation of nicotinate mononucleotide (NaMN) to nicotinic acid adenine dinucleotide (NaAD). The sequence is that of Probable nicotinate-nucleotide adenylyltransferase from Pseudomonas putida (strain ATCC 47054 / DSM 6125 / CFBP 8728 / NCIMB 11950 / KT2440).